The chain runs to 565 residues: Mannosyl-oligosaccharide 1,2-alpha-mannosidase (565 aa).

A disulfide bond links C320 and C363. The active-site Proton donor is E378. T501 contributes to the Ca(2+) binding site. Composition is skewed to basic and acidic residues over residues 526-538 and 550-565; these read NEKA…KVID and KSAD…EIAG. The disordered stretch occupies residues 526-565; that stretch reads NEKAQMRESKVIDKSNLPEAQPVDKSADQEAKEIIEEIAG.

It belongs to the glycosyl hydrolase 47 family. Requires Ca(2+) as cofactor.

The catalysed reaction is N(4)-(alpha-D-Man-(1-&gt;2)-alpha-D-Man-(1-&gt;2)-alpha-D-Man-(1-&gt;3)-[alpha-D-Man-(1-&gt;2)-alpha-D-Man-(1-&gt;3)-[alpha-D-Man-(1-&gt;2)-alpha-D-Man-(1-&gt;6)]-alpha-D-Man-(1-&gt;6)]-beta-D-Man-(1-&gt;4)-beta-D-GlcNAc-(1-&gt;4)-beta-D-GlcNAc)-L-asparaginyl-[protein] (N-glucan mannose isomer 9A1,2,3B1,2,3) + 4 H2O = N(4)-(alpha-D-Man-(1-&gt;3)-[alpha-D-Man-(1-&gt;3)-[alpha-D-Man-(1-&gt;6)]-alpha-D-Man-(1-&gt;6)]-beta-D-Man-(1-&gt;4)-beta-D-GlcNAc-(1-&gt;4)-beta-D-GlcNAc)-L-asparaginyl-[protein] (N-glucan mannose isomer 5A1,2) + 4 beta-D-mannose. It carries out the reaction N(4)-(alpha-D-Man-(1-&gt;2)-alpha-D-Man-(1-&gt;2)-alpha-D-Man-(1-&gt;3)-[alpha-D-Man-(1-&gt;3)-[alpha-D-Man-(1-&gt;2)-alpha-D-Man-(1-&gt;6)]-alpha-D-Man-(1-&gt;6)]-beta-D-Man-(1-&gt;4)-beta-D-GlcNAc-(1-&gt;4)-beta-D-GlcNAc)-L-asparaginyl-[protein] (N-glucan mannose isomer 8A1,2,3B1,3) + 3 H2O = N(4)-(alpha-D-Man-(1-&gt;3)-[alpha-D-Man-(1-&gt;3)-[alpha-D-Man-(1-&gt;6)]-alpha-D-Man-(1-&gt;6)]-beta-D-Man-(1-&gt;4)-beta-D-GlcNAc-(1-&gt;4)-beta-D-GlcNAc)-L-asparaginyl-[protein] (N-glucan mannose isomer 5A1,2) + 3 beta-D-mannose. It participates in protein modification; protein glycosylation. Involved in the maturation of Asn-linked oligosaccharides. Trim a single alpha-1,2-linked mannose residue from Man(9)GlcNAc(2) to produce Man(8)GlcNAc(2). The protein is Mannosyl-oligosaccharide 1,2-alpha-mannosidase (MNS1) of Candida albicans (Yeast).